Consider the following 355-residue polypeptide: S-adenosylmethionine:tRNA ribosyltransferase-isomerase (355 aa).

Belongs to the QueA family. In terms of assembly, monomer.

It localises to the cytoplasm. The enzyme catalyses 7-aminomethyl-7-carbaguanosine(34) in tRNA + S-adenosyl-L-methionine = epoxyqueuosine(34) in tRNA + adenine + L-methionine + 2 H(+). The protein operates within tRNA modification; tRNA-queuosine biosynthesis. In terms of biological role, transfers and isomerizes the ribose moiety from AdoMet to the 7-aminomethyl group of 7-deazaguanine (preQ1-tRNA) to give epoxyqueuosine (oQ-tRNA). This Burkholderia ambifaria (strain ATCC BAA-244 / DSM 16087 / CCUG 44356 / LMG 19182 / AMMD) (Burkholderia cepacia (strain AMMD)) protein is S-adenosylmethionine:tRNA ribosyltransferase-isomerase.